The chain runs to 338 residues: Methionine import ATP-binding protein MetN 2 (338 aa).

The 241-residue stretch at 2–242 (IEIEKVCVDF…PQHAFTQQLV (241 aa)) folds into the ABC transporter domain. 39-46 (GTSGAGKS) serves as a coordination point for ATP.

It belongs to the ABC transporter superfamily. Methionine importer (TC 3.A.1.24) family. In terms of assembly, the complex is composed of two ATP-binding proteins (MetN), two transmembrane proteins (MetI) and a solute-binding protein (MetQ).

It localises to the cell inner membrane. The enzyme catalyses L-methionine(out) + ATP + H2O = L-methionine(in) + ADP + phosphate + H(+). It catalyses the reaction D-methionine(out) + ATP + H2O = D-methionine(in) + ADP + phosphate + H(+). In terms of biological role, part of the ABC transporter complex MetNIQ involved in methionine import. Responsible for energy coupling to the transport system. The chain is Methionine import ATP-binding protein MetN 2 from Salmonella choleraesuis (strain SC-B67).